Here is a 415-residue protein sequence, read N- to C-terminus: All trans-polyprenyl-diphosphate synthase PDSS1 (415 aa).

Residues 16 to 35 (PAARSPGPGSPGRAGPLGPS) are disordered. Isopentenyl diphosphate contacts are provided by K134, R137, and H173. Residues D180 and D184 each contribute to the Mg(2+) site. Residue R190 participates in isopentenyl diphosphate binding.

It belongs to the FPP/GGPP synthase family. Heterotetramer composed of 2 PDSS1/DPS1 and 2 PDSS2/DLP1 subunits. The cofactor is Mg(2+).

It is found in the mitochondrion. The catalysed reaction is 7 isopentenyl diphosphate + (2E,6E)-farnesyl diphosphate = all-trans-decaprenyl diphosphate + 7 diphosphate. It catalyses the reaction 6 isopentenyl diphosphate + (2E,6E)-farnesyl diphosphate = all-trans-nonaprenyl diphosphate + 6 diphosphate. Its pathway is cofactor biosynthesis; ubiquinone biosynthesis. Its function is as follows. Heterotetrameric enzyme that catalyzes the condensation of farnesyl diphosphate (FPP), which acts as a primer, and isopentenyl diphosphate (IPP) to produce prenyl diphosphates of varying chain lengths and participates in the determination of the side chain of ubiquinone. Supplies nona and decaprenyl diphosphate, the precursors for the side chain of the isoprenoid quinones ubiquinone-9 (Q9)and ubiquinone-10 (Q10) respectively. The enzyme adds isopentenyl diphosphate molecules sequentially to farnesyl diphosphate with trans stereochemistry. This is All trans-polyprenyl-diphosphate synthase PDSS1 from Homo sapiens (Human).